Reading from the N-terminus, the 365-residue chain is Putative 2-dehydropantoate 2-reductase (365 aa).

It belongs to the ketopantoate reductase family.

The catalysed reaction is (R)-pantoate + NADP(+) = 2-dehydropantoate + NADPH + H(+). It functions in the pathway cofactor biosynthesis; (R)-pantothenate biosynthesis; (R)-pantoate from 3-methyl-2-oxobutanoate: step 2/2. Functionally, catalyzes the NADPH-dependent reduction of ketopantoate into pantoic acid. The protein is Putative 2-dehydropantoate 2-reductase (KPR) of Arabidopsis thaliana (Mouse-ear cress).